The primary structure comprises 232 residues: Phosphatidylserine decarboxylase proenzyme (232 aa).

The active-site Schiff-base intermediate with substrate; via pyruvic acid is the serine 190. Serine 190 carries the pyruvic acid (Ser); by autocatalysis modification.

The protein belongs to the phosphatidylserine decarboxylase family. PSD-A subfamily. Heterodimer of a large membrane-associated beta subunit and a small pyruvoyl-containing alpha subunit. It depends on pyruvate as a cofactor. Is synthesized initially as an inactive proenzyme. Formation of the active enzyme involves a self-maturation process in which the active site pyruvoyl group is generated from an internal serine residue via an autocatalytic post-translational modification. Two non-identical subunits are generated from the proenzyme in this reaction, and the pyruvate is formed at the N-terminus of the alpha chain, which is derived from the carboxyl end of the proenzyme. The post-translation cleavage follows an unusual pathway, termed non-hydrolytic serinolysis, in which the side chain hydroxyl group of the serine supplies its oxygen atom to form the C-terminus of the beta chain, while the remainder of the serine residue undergoes an oxidative deamination to produce ammonia and the pyruvoyl prosthetic group on the alpha chain.

It localises to the cell membrane. It catalyses the reaction a 1,2-diacyl-sn-glycero-3-phospho-L-serine + H(+) = a 1,2-diacyl-sn-glycero-3-phosphoethanolamine + CO2. Its pathway is phospholipid metabolism; phosphatidylethanolamine biosynthesis; phosphatidylethanolamine from CDP-diacylglycerol: step 2/2. In terms of biological role, catalyzes the formation of phosphatidylethanolamine (PtdEtn) from phosphatidylserine (PtdSer). The sequence is that of Phosphatidylserine decarboxylase proenzyme from Cereibacter sphaeroides (strain ATCC 17025 / ATH 2.4.3) (Rhodobacter sphaeroides).